Consider the following 124-residue polypeptide: TP53-target gene 3 protein (124 aa).

A compositionally biased stretch (polar residues) spans 1–11; that stretch reads MRASPCISQPA. Residues 1 to 42 form a disordered region; the sequence is MRASPCISQPAASWHPRPSALRPTAGSGPDTRTPGTVEDGSA.

In terms of tissue distribution, strongly expressed in testis. Weakly expressed in heart, placenta and skeletal muscle.

Its subcellular location is the cytoplasm. The protein resides in the nucleus. Functionally, may play a significant role in p53/TP53-mediating signaling pathway. This chain is TP53-target gene 3 protein, found in Homo sapiens (Human).